The primary structure comprises 204 residues: RNA-free ribonuclease P (204 aa).

It belongs to the HARP family.

The enzyme catalyses Endonucleolytic cleavage of RNA, removing 5'-extranucleotides from tRNA precursor.. RNA-free RNase P that catalyzes the removal of the 5'-leader sequence from pre-tRNA to produce the mature 5'-terminus. The protein is RNA-free ribonuclease P of Pyrococcus abyssi (strain GE5 / Orsay).